Here is a 578-residue protein sequence, read N- to C-terminus: 2-succinyl-5-enolpyruvyl-6-hydroxy-3-cyclohexene-1-carboxylate synthase (578 aa).

This sequence belongs to the TPP enzyme family. MenD subfamily. In terms of assembly, homodimer. The cofactor is Mg(2+). Requires Mn(2+) as cofactor. Thiamine diphosphate is required as a cofactor.

The enzyme catalyses isochorismate + 2-oxoglutarate + H(+) = 5-enolpyruvoyl-6-hydroxy-2-succinyl-cyclohex-3-ene-1-carboxylate + CO2. It participates in quinol/quinone metabolism; 1,4-dihydroxy-2-naphthoate biosynthesis; 1,4-dihydroxy-2-naphthoate from chorismate: step 2/7. Its pathway is quinol/quinone metabolism; menaquinone biosynthesis. In terms of biological role, catalyzes the thiamine diphosphate-dependent decarboxylation of 2-oxoglutarate and the subsequent addition of the resulting succinic semialdehyde-thiamine pyrophosphate anion to isochorismate to yield 2-succinyl-5-enolpyruvyl-6-hydroxy-3-cyclohexene-1-carboxylate (SEPHCHC). This is 2-succinyl-5-enolpyruvyl-6-hydroxy-3-cyclohexene-1-carboxylate synthase from Prosthecochloris aestuarii (strain DSM 271 / SK 413).